Consider the following 273-residue polypeptide: Putative phosphoenolpyruvate synthase regulatory protein (273 aa).

Position 153-160 (153-160) interacts with ADP; sequence GVSRSGKT.

Belongs to the pyruvate, phosphate/water dikinase regulatory protein family. PSRP subfamily.

The catalysed reaction is [pyruvate, water dikinase] + ADP = [pyruvate, water dikinase]-phosphate + AMP + H(+). It catalyses the reaction [pyruvate, water dikinase]-phosphate + phosphate + H(+) = [pyruvate, water dikinase] + diphosphate. Functionally, bifunctional serine/threonine kinase and phosphorylase involved in the regulation of the phosphoenolpyruvate synthase (PEPS) by catalyzing its phosphorylation/dephosphorylation. The sequence is that of Putative phosphoenolpyruvate synthase regulatory protein from Polaromonas sp. (strain JS666 / ATCC BAA-500).